Here is an 89-residue protein sequence, read N- to C-terminus: Mitochondrial import inner membrane translocase subunit Tim9 (89 aa).

The residue at position 2 (Ala-2) is an N-acetylalanine. The Twin CX3C motif motif lies at 28-52 (CFLDCVKDFTTREVKPEEVTCSEHC). Disulfide bonds link Cys-28–Cys-52 and Cys-32–Cys-48.

It belongs to the small Tim family. Heterohexamer; composed of 3 copies of TIMM9 and 3 copies of TIMM10/TIM10A, named soluble 70 kDa complex. The complex forms a 6-bladed alpha-propeller structure and associates with the TIMM22 component of the TIM22 complex. Interacts with multi-pass transmembrane proteins in transit. Also forms a complex composed of TIMM9, TIMM10/TIM10A and FXC1/TIM10B.

It localises to the mitochondrion inner membrane. In terms of biological role, mitochondrial intermembrane chaperone that participates in the import and insertion of multi-pass transmembrane proteins into the mitochondrial inner membrane. May also be required for the transfer of beta-barrel precursors from the TOM complex to the sorting and assembly machinery (SAM complex) of the outer membrane. Acts as a chaperone-like protein that protects the hydrophobic precursors from aggregation and guide them through the mitochondrial intermembrane space. The sequence is that of Mitochondrial import inner membrane translocase subunit Tim9 (Timm9) from Rattus norvegicus (Rat).